A 334-amino-acid chain; its full sequence is G-protein coupled receptor 12 (334 aa).

Residues 1–48 (MNEDPKVNLSGLPRDCIDAGAPENISAAVPSQGSVAESEPELVVNPWD) lie on the Extracellular side of the membrane. Residues N8 and N24 are each glycosylated (N-linked (GlcNAc...) asparagine). Residues 49–69 (IVLCSSGTLICCENAVVVLII) form a helical membrane-spanning segment. At 70 to 78 (FHSPSLRAP) the chain is on the cytoplasmic side. Residues 79–99 (MFLLIGSLALADLLAGLGLII) traverse the membrane as a helical segment. Residues 100 to 113 (NFVFAYLLQSEATK) lie on the Extracellular side of the membrane. The chain crosses the membrane as a helical span at residues 114–134 (LVTIGLIVASFSASVCSLLAI). Residues 135–158 (TVDRYLSLYYALTYHSERTVTFTY) lie on the Cytoplasmic side of the membrane. A helical membrane pass occupies residues 159-179 (VMLVMLWGTSICLGLLPVMGW). Residues 180–199 (NCLRDESTCSVVRPLTKNNA) are Extracellular-facing. The helical transmembrane segment at 200–220 (AILSISFLFMFALMLQLYIQI) threads the bilayer. Residues 221–252 (CKIVMRHAHQIALQHHFLATSHYVTTRKGVST) are Cytoplasmic-facing. The helical transmembrane segment at 253–273 (LALILGTFAACWMPFTLYSLI) threads the bilayer. Residues 274–282 (ADYTYPSIY) lie on the Extracellular side of the membrane. The chain crosses the membrane as a helical span at residues 283–303 (TYATLLPATYNSIINPVIYAF). The Cytoplasmic portion of the chain corresponds to 304 to 334 (RNQEIQKALCLICCGCIPSSLSQRARSPSDV). A lipid anchor (S-palmitoyl cysteine) is attached at C317. S330 and S332 each carry phosphoserine.

It belongs to the G-protein coupled receptor 1 family. As to expression, expressed predominantly in the forebrain and a lesser extent in the hindbrain. Lower expression in the liver.

It localises to the cell membrane. Its function is as follows. Receptor with constitutive G(s) signaling activity that stimulates cyclic AMP production. Promotes neurite outgrowth and blocks myelin inhibition in neurons. The polypeptide is G-protein coupled receptor 12 (Gpr12) (Mus musculus (Mouse)).